A 311-amino-acid chain; its full sequence is Probable deoxyhypusine synthase (311 aa).

The active-site Nucleophile is Lys-284.

This sequence belongs to the deoxyhypusine synthase family. It depends on NAD(+) as a cofactor.

It catalyses the reaction [eIF5A protein]-L-lysine + spermidine = [eIF5A protein]-deoxyhypusine + propane-1,3-diamine. Its pathway is protein modification; eIF5A hypusination. Functionally, catalyzes the NAD-dependent oxidative cleavage of spermidine and the subsequent transfer of the butylamine moiety of spermidine to the epsilon-amino group of a specific lysine residue of the eIF-5A precursor protein to form the intermediate deoxyhypusine residue. In Sulfolobus acidocaldarius (strain ATCC 33909 / DSM 639 / JCM 8929 / NBRC 15157 / NCIMB 11770), this protein is Probable deoxyhypusine synthase.